A 320-amino-acid chain; its full sequence is Olfactory receptor 2AT4 (320 aa).

Over 1–31 (MDATACNESVDGSPVFYLLGIPSLPETFFLP) the chain is Extracellular. N-linked (GlcNAc...) asparagine glycosylation occurs at asparagine 7. The helical transmembrane segment at 32–52 (VFFIFLLFYLLILMGNALILV) threads the bilayer. Topologically, residues 53–62 (AVVAEPSLHK) are cytoplasmic. A helical membrane pass occupies residues 63 to 83 (PMYFFLINLSTLDILFTTTTV). The Extracellular segment spans residues 84-102 (PKMLSLFLLGDRFLSFSSC). Cysteines 102 and 184 form a disulfide. Residues 103–123 (LLQMYLFQSFTCSEAFILVVM) form a helical membrane-spanning segment. Residues 124–145 (AYDRYVAICHPLHYPVLMNPQT) lie on the Cytoplasmic side of the membrane. A helical transmembrane segment spans residues 146–166 (NATLAASAWLTALLLPIPAVV). Topologically, residues 167–200 (RTSQMAYNSIAYIYHCFCDHLAVVQASCSDTTPQ) are extracellular. Residues 201 to 221 (TLMGFCIAMVVSFLPLLLVLL) form a helical membrane-spanning segment. The Cytoplasmic segment spans residues 222–245 (SYVHILASVLRISSLEGRAKAFST). Residues 246 to 266 (CSSHLLVVGTYYSSIAIAYVA) form a helical membrane-spanning segment. Residues 267–276 (YRADLPLDFH) are Extracellular-facing. The chain crosses the membrane as a helical span at residues 277–297 (IMGNVVYAILTPILNPLIYTL). Topologically, residues 298–320 (RNRDVKAAITKIMSQDPGCDRSI) are cytoplasmic.

It belongs to the G-protein coupled receptor 1 family. In terms of tissue distribution, detected in the keratinocytes of the epidermis (at protein level). Detected in hair follicles in proximal outer root sheath and hair matrix keratinocytes (at protein level).

It is found in the cell membrane. Functionally, olfactory receptor. Activated by the synthetic sandalwood odorant sandalore. Endogenous ligand is unknown. The activity of this receptor is probably mediated by G proteins which induce elevation of intracellular Ca(2+), a cAMP-dependent pathway and phosphorylation of MAPK1/ERK2, MAPK3/ERK1 and p38 MAPKs. Activation of OR2AT4 induces proliferation, migration, and re-epithelialization during wound-healing processes of keratinocytes. Stimulation of OR2AT4 by sandalore promotes hair growth by decreasing apoptosis and increasing production of the anagen-prolonging growth factor IGF1 as well as other pathways involving various kinases. This is Olfactory receptor 2AT4 from Homo sapiens (Human).